The chain runs to 193 residues: Alpha-S2-casein (193 aa).

The signal sequence occupies residues 1-15 (MKFFIFTCLLAVVLA). A phosphoserine mark is found at Ser23, Ser24, Ser25, Ser28, Ser47, Ser68, Ser123, Ser125, Ser128, and Ser136.

This sequence belongs to the alpha-casein family. In terms of tissue distribution, mammary gland specific. Secreted in milk.

It is found in the secreted. Important role in the capacity of milk to transport calcium phosphate. The chain is Alpha-S2-casein (CSN1S2) from Camelus dromedarius (Dromedary).